Reading from the N-terminus, the 111-residue chain is Ribonuclease P protein component (111 aa).

The protein belongs to the RnpA family. In terms of assembly, consists of a catalytic RNA component (M1 or rnpB) and a protein subunit.

It carries out the reaction Endonucleolytic cleavage of RNA, removing 5'-extranucleotides from tRNA precursor.. Its function is as follows. RNaseP catalyzes the removal of the 5'-leader sequence from pre-tRNA to produce the mature 5'-terminus. It can also cleave other RNA substrates such as 4.5S RNA. The protein component plays an auxiliary but essential role in vivo by binding to the 5'-leader sequence and broadening the substrate specificity of the ribozyme. The sequence is that of Ribonuclease P protein component from Clostridium botulinum (strain 657 / Type Ba4).